A 2485-amino-acid chain; its full sequence is Tyrosine-protein phosphatase non-receptor type 13 (2485 aa).

The 188-residue stretch at 3-190 (VSLAEALEVR…SGTDQLSCNS (188 aa)) folds into the KIND domain. Positions 186-220 (LSCNSEQKPDRSQAIRDRLRGKGLPTGRSSTSDVL) are disordered. Over residues 192–205 (QKPDRSQAIRDRLR) the composition is skewed to basic and acidic residues. Serine 240 carries the post-translational modification Phosphoserine. Positions 260–283 (SDNSGREDSENTFSPYQFKTSGPE) are disordered. Polar residues predominate over residues 270-279 (NTFSPYQFKT). A phosphoserine mark is found at serine 301 and serine 302. The tract at residues 433–467 (RSEASKRFESSSGLPGVDETLSQGQSQRPSRQYET) is disordered. Positions 452–465 (TLSQGQSQRPSRQY) are enriched in polar residues. Residues 469–504 (FEGNLINQEIMLKRQEEELMQLQAKMALRQSRLSLY) adopt a coiled-coil conformation. The region spanning 572–872 (RKVNIMLLNG…YQHKFQLQMR (301 aa)) is the FERM domain. Phosphoserine occurs at positions 890, 897, 908, 911, and 914. Disordered stretches follow at residues 947 to 975 (QNSSKEKNDKASWEEKPREMSKSYHDLSQ) and 995 to 1049 (TVAE…IEDP). Residues 950 to 971 (SKEKNDKASWEEKPREMSKSYH) show a composition bias toward basic and acidic residues. Residues 1020 to 1032 (KLNNSKSVASLNR) are compositionally biased toward polar residues. Serine 1029, serine 1033, and serine 1085 each carry phosphoserine. Residues 1033-1042 (SPERRKHESD) show a composition bias toward basic and acidic residues. One can recognise a PDZ 1 domain in the interval 1093-1178 (LVNLKKDAKY…EDVTLVISQP (86 aa)). Disordered regions lie at residues 1227–1258 (HISENSFGPSGGLREGSLSSQDSRTESASLSQ) and 1273–1362 (TWQE…SPPK). 3 stretches are compositionally biased toward polar residues: residues 1243–1258 (SLSSQDSRTESASLSQ), 1273–1288 (TWQESQHGSPSPSVIS), and 1327–1359 (TYSSSQDHQTPKQESSSSVNTSNKMNFKTFSSS). PDZ domains follow at residues 1368 to 1452 (EVEL…LEKG) and 1501 to 1588 (EVKL…LCRP). The span at 1608 to 1630 (AQVLPNSSKDSSQPSCVEQSTSS) shows a compositional bias: polar residues. 2 disordered regions span residues 1608–1665 (AQVL…DLVT) and 1715–1751 (PNKPEFEDSNPSPLPPDMAPGQSYQPQSESASSSSMD). Positions 1736-1749 (QSYQPQSESASSSS) are enriched in low complexity. PDZ domains follow at residues 1788 to 1868 (LITL…IGRV) and 1882 to 1965 (PDIT…ATRN). The disordered stretch occupies residues 1971–1996 (PSSKRSAVSAPKSTKGNGSYSVGSCS). Positions 1973-1996 (SKRSAVSAPKSTKGNGSYSVGSCS) are enriched in polar residues. One can recognise a Tyrosine-protein phosphatase domain in the interval 2213 to 2467 (PSKELENLQE…IFCYQVILYV (255 aa)). Residues aspartate 2378, 2408-2414 (CSAGIGR), and glutamine 2452 each bind substrate. Cysteine 2408 serves as the catalytic Phosphocysteine intermediate. Positions 2408–2414 (CSAGIGR) are substrate.

Belongs to the protein-tyrosine phosphatase family. Non-receptor class subfamily. As to quaternary structure, interacts (via the first PDZ domain) with PLEKHA1 and PLEKHA2. Interacts (via the second PDZ domain) with TNFRSF6 (Fas receptor) (via C-terminus). Interacts (via the second PDZ domain) with TRIP6 (via the third LIM domain and C-terminus). Interacts (via the third PDZ domain) with NGFR (via C-terminal SVP motif) and PKN2 (via C-terminus). Interacts (via the second or fourth PDZ domains) with PDLIM4 (via C-terminus only or via combined C-terminus and LIM domain, but not LIM domain only). Found in a complex with PDLIM4 and TRIP6. Interacts with PDLIM4; this interaction results in dephosphorylation of SRC 'Tyr-419' by this protein leading to its inactivation. Interacts with BRD7. Interacts with RAPGEF6. Interacts with ARHGAP29. Interacts with PIK3R2; dephosphorylates PIK3R2. Interacts with FBXL2. Interacts (via the FERM domain) with ENTR1. Found in a complex with ENTR1, PTPN13 and GIT1. As to expression, expressed in keratinocytes (at protein level). Present in most tissues with the exception of the liver and skeletal muscle. Most abundant in lung, kidney and fetal brain.

It localises to the cytoplasm. The protein localises to the cytoskeleton. The protein resides in the nucleus. It is found in the cell projection. Its subcellular location is the lamellipodium. It carries out the reaction O-phospho-L-tyrosyl-[protein] + H2O = L-tyrosyl-[protein] + phosphate. In terms of biological role, tyrosine phosphatase which negatively regulates FAS-induced apoptosis and NGFR-mediated pro-apoptotic signaling. May regulate phosphoinositide 3-kinase (PI3K) signaling through dephosphorylation of PIK3R2. The chain is Tyrosine-protein phosphatase non-receptor type 13 (PTPN13) from Homo sapiens (Human).